We begin with the raw amino-acid sequence, 189 residues long: Probable DNA-directed RNA polymerase subunit delta (189 aa).

The region spanning 14-81 is the HTH HARE-type domain; that stretch reads LSMIEVAHAI…GENVWALRTW (68 aa). Composition is skewed to acidic residues over residues 90-100 and 118-189; these read EVDHPEDDGDE and EGDD…EDEE. The disordered stretch occupies residues 90-189; it reads EVDHPEDDGD…DDLDDDEDEE (100 aa).

The protein belongs to the RpoE family. As to quaternary structure, RNAP is composed of a core of 2 alpha, a beta and a beta' subunits. The core is associated with a delta subunit and one of several sigma factors.

In terms of biological role, participates in both the initiation and recycling phases of transcription. In the presence of the delta subunit, RNAP displays an increased specificity of transcription, a decreased affinity for nucleic acids, and an increased efficiency of RNA synthesis because of enhanced recycling. This chain is Probable DNA-directed RNA polymerase subunit delta, found in Lactobacillus delbrueckii subsp. bulgaricus (strain ATCC BAA-365 / Lb-18).